A 758-amino-acid chain; its full sequence is Glucocorticoid receptor (758 aa).

Disordered regions lie at residues 1–61 (MDPG…SANG) and 349–382 (GMSSSSFPVGFSSPKARPEASGSASSAPAKPSGP). The interval 1–386 (MDPGGLKHSK…AKPSGPTHKI (386 aa)) is modulating. Positions 26-42 (GSFSGDTGGSKSTTSTS) are enriched in low complexity. 2 NR C4-type zinc fingers span residues 387-407 (CLVCSDEASGCHYGVLTCGSC) and 432-456 (CAGRNDCIIDKIRRKNCPACRFRKC). The nuclear receptor DNA-binding region spans 387-461 (CLVCSDEASG…RFRKCLQAGM (75 aa)). The hinge stretch occupies residues 462 to 498 (NLEARKNKKLIRLKGQQTTMEPNPPPPDERACALIPK). The 235-residue stretch at 499–733 (SMPQLVPTML…FPEMLAEIIS (235 aa)) folds into the NR LBD domain.

It belongs to the nuclear hormone receptor family. NR3 subfamily. Heteromultimeric cytoplasmic complex with HSP90AA1, HSPA1A/HSPA1B, and FKBP5 or another immunophilin such as PPID, STIP1, or the immunophilin homolog PPP5C. Upon ligand binding FKBP5 dissociates from the complex and FKBP4 takes its place, thereby linking the complex to dynein and mediating transport to the nucleus, where the complex dissociates. Directly interacts with UNC45A. Binds to DNA as a homodimer, and as heterodimer with NR3C2 or the retinoid X receptor. Binds STAT5A and STAT5B homodimers and heterodimers. Interacts with NRIP1, POU2F1, POU2F2 and TRIM28. Interacts with several coactivator complexes, including the SMARCA4 complex, CREBBP/EP300, TADA2L (Ada complex) and p160 coactivators such as NCOA2 and NCOA6. Interaction with BAG1 inhibits transactivation. Interacts with HEXIM1, PELP1 and TGFB1I1. Interacts with NCOA1, NCOA3, SMARCA4, SMARCC1, SMARCD1, and SMARCE1. Post-translationally, phosphorylated in the absence of hormone; becomes hyperphosphorylated in the presence of glucocorticoids. May be dephosphorylated by PPP5C, attenuates NR3C1 action. As to expression, isoform 1 is expressed in all tissues tested including liver, gills, intestine, skeletal muscle, kidney, heart, spleen, stomach, brain, pituitary, ovary, testis, skin and bladder. Isoform 2 is found only in testis.

Its subcellular location is the cytoplasm. It is found in the nucleus. The protein localises to the mitochondrion. It localises to the cytoskeleton. The protein resides in the spindle. Its subcellular location is the microtubule organizing center. It is found in the centrosome. Functionally, receptor for glucocorticoids (GC). Has a dual mode of action: as a transcription factor that binds to glucocorticoid response elements (GRE), both for nuclear and mitochondrial DNA, and as a modulator of other transcription factors. Affects inflammatory responses, cellular proliferation and differentiation in target tissues. Involved in chromatin remodeling. Plays a role in rapid mRNA degradation by binding to the 5' UTR of target mRNAs and interacting with PNRC2 in a ligand-dependent manner which recruits the RNA helicase UPF1 and the mRNA-decapping enzyme DCP1A, leading to RNA decay. Could act as a coactivator for STAT5-dependent transcription upon growth hormone (GH) stimulation and could reveal an essential role of hepatic GR in the control of body growth. Mediates glucocorticoid-induced apoptosis. Promotes accurate chromosome segregation during mitosis. May act as a tumor suppressor. May play a negative role in adipogenesis through the regulation of lipolytic and antilipogenic gene expression. In Oncorhynchus mykiss (Rainbow trout), this protein is Glucocorticoid receptor (nr3c1).